We begin with the raw amino-acid sequence, 679 residues long: Glycine--tRNA ligase beta subunit (679 aa).

This sequence belongs to the class-II aminoacyl-tRNA synthetase family. As to quaternary structure, tetramer of two alpha and two beta subunits.

It localises to the cytoplasm. It carries out the reaction tRNA(Gly) + glycine + ATP = glycyl-tRNA(Gly) + AMP + diphosphate. The sequence is that of Glycine--tRNA ligase beta subunit from Streptococcus pyogenes serotype M18 (strain MGAS8232).